Reading from the N-terminus, the 776-residue chain is E3 ubiquitin-protein ligase UHRF1 (776 aa).

Positions 1–78 (MWIQVRTMDG…VQLLVRQAVA (78 aa)) constitute a Ubiquitin-like domain. The disordered stretch occupies residues 88–126 (AELSDSDSGCGSAQSESDKGSTHGESDVQSAGASGQTDT). A compositionally biased stretch (polar residues) spans 93 to 102 (SDSGCGSAQS). The segment covering 103–113 (ESDKGSTHGES) has biased composition (basic and acidic residues). The span at 114-126 (DVQSAGASGQTDT) shows a compositional bias: polar residues. 2 tudor-like regions span residues 135–201 (GFYK…PRAR) and 208–277 (QLEP…IEEP). A disordered region spans residues 278–298 (GSAEGPGASSDSPLKKGSNGP). Residues 290–299 (PLKKGSNGPE) are linker. The segment at 297–364 (GPECKVCKDD…DWYCPDCRND (68 aa)) adopts a PHD-type zinc-finger fold. 2 histone H3R2me0 binding regions span residues 331–335 (CDECD) and 351–353 (PDD). Positions 417 to 580 (GPVPGVPVGT…FLVWRYLLKR (164 aa)) constitute a YDG domain. A required to promote base flipping region spans residues 443-444 (HV). DNA-binding positions include 461 to 462 (AG) and D467. 2 required for formation of a 5-methylcytosine-binding pocket regions span residues 464–467 (YEDD) and 476–479 (YTGS). The interval 617–660 (EKEKENKNEDDIEETPTKGKRKRKSQSMEEKSSPTKGTPKKMKV) is disordered. A Phosphoserine; by CDK2 modification is found at S649. The RING-type zinc-finger motif lies at 706–745 (CICCQEVVYQPITTECQHNVCRECLQRSFKAKVYTCPACR).

Phosphorylation at Ser-649 is required for gastrulation. In terms of tissue distribution, expressed in proliferating tissues. Highly expressed 24-48 hours after fertilization (hpf) in rapidly proliferating tissues, including the tectum, retina and brachial arches. Preferentially expressed in the liver bud and expression is maintained in the fully developed liver. Also expressed in the proximal gut. In adult, the highest expression is detected in testis.

The protein resides in the nucleus. Its subcellular location is the cytoplasm. The enzyme catalyses S-ubiquitinyl-[E2 ubiquitin-conjugating enzyme]-L-cysteine + [acceptor protein]-L-lysine = [E2 ubiquitin-conjugating enzyme]-L-cysteine + N(6)-ubiquitinyl-[acceptor protein]-L-lysine.. Its pathway is protein modification; protein ubiquitination. Its function is as follows. Multidomain protein that acts as a key epigenetic regulator by bridging DNA methylation and chromatin modification. Specifically recognizes and binds hemimethylated DNA at replication forks via its YDG domain and recruits dnmt1 methyltransferase to ensure faithful propagation of the DNA methylation patterns through DNA replication. In addition to its role in maintenance of DNA methylation, also plays a key role in chromatin modification: through its tudor-like regions and PHD-type zinc fingers, specifically recognizes and binds histone H3 trimethylated at 'Lys-9' (H3K9me3) and unmethylated at 'Arg-2' (H3R2me0), respectively, and recruits chromatin proteins. Enriched in pericentric heterochromatin where it recruits different chromatin modifiers required for this chromatin replication. Also localizes to euchromatic regions where it negatively regulates transcription possibly by impacting DNA methylation and histone modifications. Has E3 ubiquitin-protein ligase activity by mediating the ubiquitination of target proteins. However, it is still unclear how E3 ubiquitin-protein ligase activity is related to its role in chromatin in vivo. Required for pregastrula and lens development. This chain is E3 ubiquitin-protein ligase UHRF1 (uhrf1), found in Danio rerio (Zebrafish).